Reading from the N-terminus, the 348-residue chain is MENLVAGSTLPPLFADEDGSKEGSDVTVTGLAHSESSFTGGTSQPVNNPDLVEDLSQVQQLQNESTNTAENTEQKPEEEQQRTKRGGWAKGRKRKKPLRDSNAPKSPLTGYVRFMNERREQLRAKRPEVPFPEITRMLGNEWSKLPPEEKRRYLDEADRDKERYMRELEQYQKTEAYKVFSRKAQDRQKGKLHRQDGARQPVHDHEKEADTKERSVFDIPIFTEEFLNHSKAREAELRQLRKSNMEFEERNAALQKHVESMRTAVEKLEVDVIQERSRNTVLQQHLETLRQALTTSFAGVPLPGSGETPTMETIDSYMNRLHGIIMANPQENENLIATVRDVVNRLER.

2 disordered regions span residues 1 to 114 (MENL…YVRF) and 181 to 213 (SRKAQDRQKGKLHRQDGARQPVHDHEKEADTKE). 2 stretches are compositionally biased toward polar residues: residues 34–47 (SESSFTGGTSQPVN) and 56–71 (SQVQQLQNESTNTAEN). The span at 72 to 82 (TEQKPEEEQQR) shows a compositional bias: basic and acidic residues. The segment covering 83–97 (TKRGGWAKGRKRKKP) has biased composition (basic residues). Residues 104–172 (PKSPLTGYVR…RYMRELEQYQ (69 aa)) constitute a DNA-binding region (HMG box). Residues 183–213 (KAQDRQKGKLHRQDGARQPVHDHEKEADTKE) show a composition bias toward basic and acidic residues. Residues 230–274 (SKAREAELRQLRKSNMEFEERNAALQKHVESMRTAVEKLEVDVIQ) adopt a coiled-coil conformation.

The protein resides in the nucleus. Plays a role in neuronal differentiation. In Gallus gallus (Chicken), this protein is High mobility group protein 20A (HMG20A).